The primary structure comprises 343 residues: D-alanine--D-alanine ligase (343 aa).

The ATP-grasp domain occupies 129–335 (KYVLEHFNIK…YSKLIDELIE (207 aa)). ATP is bound at residue 162 to 217 (ENKLGYAVFIKPSNSGSSVGITKAHNRKELEAGLEEAMKYDRKILVEEALNAREIE). The Mg(2+) site is built by Asp288, Glu302, and Asn304.

It belongs to the D-alanine--D-alanine ligase family. Mg(2+) serves as cofactor. Mn(2+) is required as a cofactor.

Its subcellular location is the cytoplasm. The enzyme catalyses 2 D-alanine + ATP = D-alanyl-D-alanine + ADP + phosphate + H(+). Its pathway is cell wall biogenesis; peptidoglycan biosynthesis. In terms of biological role, cell wall formation. The chain is D-alanine--D-alanine ligase from Clostridium acetobutylicum (strain ATCC 824 / DSM 792 / JCM 1419 / IAM 19013 / LMG 5710 / NBRC 13948 / NRRL B-527 / VKM B-1787 / 2291 / W).